The primary structure comprises 220 residues: Large ribosomal subunit protein uL16 (220 aa).

It belongs to the universal ribosomal protein uL16 family. Component of the large ribosomal subunit. Mature ribosomes consist of a small (40S) and a large (60S) subunit. The 40S subunit contains about 32 different proteins and 1 molecule of RNA (18S). The 60S subunit contains 45 different proteins and 3 molecules of RNA (25S, 5.8S and 5S).

Its subcellular location is the cytoplasm. In terms of biological role, component of the ribosome, a large ribonucleoprotein complex responsible for the synthesis of proteins in the cell. The small ribosomal subunit (SSU) binds messenger RNAs (mRNAs) and translates the encoded message by selecting cognate aminoacyl-transfer RNA (tRNA) molecules. The large subunit (LSU) contains the ribosomal catalytic site termed the peptidyl transferase center (PTC), which catalyzes the formation of peptide bonds, thereby polymerizing the amino acids delivered by tRNAs into a polypeptide chain. The nascent polypeptides leave the ribosome through a tunnel in the LSU and interact with protein factors that function in enzymatic processing, targeting, and the membrane insertion of nascent chains at the exit of the ribosomal tunnel. This Candida albicans (strain SC5314 / ATCC MYA-2876) (Yeast) protein is Large ribosomal subunit protein uL16.